Consider the following 591-residue polypeptide: Splicing factor U2af large subunit A (591 aa).

Residues 1–215 form a disordered region; that stretch reads MAEHDAPPES…QSKRMSGFDQ (215 aa). Residues 27-36 show a composition bias toward polar residues; sequence SPQQDAQPLS. Composition is skewed to basic and acidic residues over residues 37–79 and 157–191; these read SRDR…SRDR and RERSERREHRDRSDDRDYRRSCDRDAERRDRDRDG. RRM domains are found at residues 272-355 and 392-470; these read RRVY…RPTD and DRIF…RANQ.

The protein belongs to the splicing factor SR family.

It is found in the nucleus. In terms of biological role, necessary for the splicing of pre-mRNA. This is Splicing factor U2af large subunit A (U2AF65A) from Triticum aestivum (Wheat).